A 360-amino-acid chain; its full sequence is Protein phosphatase methylesterase 1 (360 aa).

The tract at residues 26-50 is disordered; sequence DEDDIPEPAVMPPTGNSSSTANTED. Active-site residues include serine 167, aspartate 192, and histidine 316.

This sequence belongs to the AB hydrolase superfamily.

The catalysed reaction is [phosphatase 2A protein]-C-terminal L-leucine methyl ester + H2O = [phosphatase 2A protein]-C-terminal L-leucine + methanol + H(+). Demethylates proteins that have been reversibly carboxymethylated. Demethylates the phosphatase PP2A catalytic subunit. Involved in the regulation of filamentous growth. The chain is Protein phosphatase methylesterase 1 (PPE1) from Candida albicans (strain SC5314 / ATCC MYA-2876) (Yeast).